A 363-amino-acid chain; its full sequence is Serine/threonine-protein kinase SRK2A (363 aa).

The Protein kinase domain maps to 4 to 260; the sequence is YELVKDIGAG…IAEIKKHSWF (257 aa). Residues 10 to 18 and lysine 33 each bind ATP; that span reads IGAGNFGVA. Residue aspartate 123 is the Proton acceptor of the active site. Positions 306-363 are disordered; the sequence is SRSIGGFGWGGNGDADGKEEDAEDVEEEEEEVEEEEDDEDEYDKTVKEVHASGEVRIS. The segment covering 310-319 has biased composition (gly residues); that stretch reads GGFGWGGNGD. Positions 322 to 347 are enriched in acidic residues; that stretch reads GKEEDAEDVEEEEEEVEEEEDDEDEY. Residues 348–363 show a composition bias toward basic and acidic residues; the sequence is DKTVKEVHASGEVRIS.

The protein belongs to the protein kinase superfamily. Ser/Thr protein kinase family. As to quaternary structure, interacts with TOPP1. As to expression, expressed in seedlings.

The catalysed reaction is L-seryl-[protein] + ATP = O-phospho-L-seryl-[protein] + ADP + H(+). It carries out the reaction L-threonyl-[protein] + ATP = O-phospho-L-threonyl-[protein] + ADP + H(+). The sequence is that of Serine/threonine-protein kinase SRK2A (SRK2A) from Arabidopsis thaliana (Mouse-ear cress).